The primary structure comprises 361 residues: D-alanine--D-alanine ligase (361 aa).

An ATP-grasp domain is found at 134 to 344; it reads KLLLKSFNIP…FKDLIDNLID (211 aa). Residue 167–222 participates in ATP binding; sequence KEVLGYPVIVKPAVLGSSIGINVAYSENQIESCIEEALKYDLTIVIEKFIEAREIE. D297, E311, and N313 together coordinate Mg(2+).

The protein belongs to the D-alanine--D-alanine ligase family. It depends on Mg(2+) as a cofactor. Mn(2+) is required as a cofactor.

Its subcellular location is the cytoplasm. The enzyme catalyses 2 D-alanine + ATP = D-alanyl-D-alanine + ADP + phosphate + H(+). It functions in the pathway cell wall biogenesis; peptidoglycan biosynthesis. Functionally, cell wall formation. This chain is D-alanine--D-alanine ligase, found in Borreliella afzelii (strain PKo) (Borrelia afzelii).